We begin with the raw amino-acid sequence, 250 residues long: Ribosomal RNA small subunit methyltransferase J (250 aa).

Residues 101-102, 117-118, 153-154, and Asp171 each bind S-adenosyl-L-methionine; these read RD, ER, and SS.

Belongs to the methyltransferase superfamily. RsmJ family.

Its subcellular location is the cytoplasm. It catalyses the reaction guanosine(1516) in 16S rRNA + S-adenosyl-L-methionine = N(2)-methylguanosine(1516) in 16S rRNA + S-adenosyl-L-homocysteine + H(+). Its function is as follows. Specifically methylates the guanosine in position 1516 of 16S rRNA. In Escherichia coli (strain UTI89 / UPEC), this protein is Ribosomal RNA small subunit methyltransferase J.